The primary structure comprises 146 residues: Nitric oxide reductase subunit C (146 aa).

The chain crosses the membrane as a helical; Signal-anchor span at residues 13–29; that stretch reads IYFGGSVFFILLFLALT. Heme c is bound by residues C61, C64, and H65.

Heterodimer of cytochromes b (large subunit) and c (small subunit).

The protein resides in the cell membrane. Its function is as follows. Component of the anaerobic respiratory chain that transforms nitrate to dinitrogen (denitrification). In Pseudomonas aeruginosa (strain ATCC 15692 / DSM 22644 / CIP 104116 / JCM 14847 / LMG 12228 / 1C / PRS 101 / PAO1), this protein is Nitric oxide reductase subunit C (norC).